A 272-amino-acid chain; its full sequence is 2-succinyl-6-hydroxy-2,4-cyclohexadiene-1-carboxylate synthase (272 aa).

The protein belongs to the AB hydrolase superfamily. MenH family. Monomer.

The catalysed reaction is 5-enolpyruvoyl-6-hydroxy-2-succinyl-cyclohex-3-ene-1-carboxylate = (1R,6R)-6-hydroxy-2-succinyl-cyclohexa-2,4-diene-1-carboxylate + pyruvate. The protein operates within quinol/quinone metabolism; 1,4-dihydroxy-2-naphthoate biosynthesis; 1,4-dihydroxy-2-naphthoate from chorismate: step 3/7. It participates in quinol/quinone metabolism; menaquinone biosynthesis. Its function is as follows. Catalyzes a proton abstraction reaction that results in 2,5-elimination of pyruvate from 2-succinyl-5-enolpyruvyl-6-hydroxy-3-cyclohexene-1-carboxylate (SEPHCHC) and the formation of 2-succinyl-6-hydroxy-2,4-cyclohexadiene-1-carboxylate (SHCHC). This is 2-succinyl-6-hydroxy-2,4-cyclohexadiene-1-carboxylate synthase from Yersinia pseudotuberculosis serotype IB (strain PB1/+).